A 511-amino-acid chain; its full sequence is Centrosomal protein CCDC61 (511 aa).

N-acetylmethionine is present on methionine 1. A head domain region spans residues 1–143; sequence MDQPAGLQVD…PLPLPYQGKP (143 aa). 2 coiled-coil regions span residues 176-203 and 246-273; these read IWHLREQVTRLTSEKRELEAQLGRSREE and SRRLAKELEEVKASERNLRARLKTLNSE. Threonine 283 carries the post-translational modification Phosphothreonine. 2 disordered regions span residues 284–413 and 429–476; these read LPPV…DSFR and SHSV…GGWV. Basic and acidic residues predominate over residues 290 to 302; the sequence is REGRASSSRERST. Phosphoserine is present on residues serine 330 and serine 332. Positions 360-369 are enriched in low complexity; it reads KQQQQQRNRM. Phosphoserine occurs at positions 371 and 374. Residues 433 to 442 show a composition bias toward basic residues; the sequence is SRSRRCRGRG. Phosphoserine is present on serine 446. Positions 449 to 458 are enriched in polar residues; the sequence is PWSRSKTKST. Serine 472 is modified (phosphoserine).

It belongs to the CCDC61 family. As to quaternary structure, forms homodimers (via head domain). Interacts with CEP170. Interacts with PCM1 and CEP131. Binds tubulin.

The protein resides in the cytoplasm. The protein localises to the cytoskeleton. Its subcellular location is the microtubule organizing center. It localises to the centrosome. It is found in the centriolar satellite. The protein resides in the cilium basal body. Its function is as follows. Microtubule-binding centrosomal protein required for centriole cohesion, independently of the centrosome-associated protein/CEP250 and rootletin/CROCC linker. In interphase, required for anchoring microtubule at the mother centriole subdistal appendages and for centrosome positioning. During mitosis, may be involved in spindle assembly and chromatin alignment by regulating the organization of spindle microtubules into a symmetrical structure. Plays a non-essential role in ciliogenesis. This is Centrosomal protein CCDC61 from Mus musculus (Mouse).